The chain runs to 328 residues: D-cysteine desulfhydrase (328 aa).

Position 51 is an N6-(pyridoxal phosphate)lysine (lysine 51).

This sequence belongs to the ACC deaminase/D-cysteine desulfhydrase family. In terms of assembly, homodimer. Pyridoxal 5'-phosphate is required as a cofactor.

The catalysed reaction is D-cysteine + H2O = hydrogen sulfide + pyruvate + NH4(+) + H(+). Catalyzes the alpha,beta-elimination reaction of D-cysteine and of several D-cysteine derivatives. It could be a defense mechanism against D-cysteine. The sequence is that of D-cysteine desulfhydrase from Shigella boydii serotype 18 (strain CDC 3083-94 / BS512).